Reading from the N-terminus, the 680-residue chain is Conserved oligomeric Golgi complex subunit 6 (680 aa).

Residues 479–517 form a disordered region; sequence HKSKKSGQLPRRSRTSSDSSQLTSVDALLSSSPSPPQNN.

It belongs to the COG6 family. Component of the conserved oligomeric Golgi complex which is composed of eight different subunits and is required for normal Golgi morphology and localization. Interacts with COG5, COG7 and COG8.

The protein localises to the golgi apparatus membrane. Required for normal Golgi function. This chain is Conserved oligomeric Golgi complex subunit 6, found in Arabidopsis thaliana (Mouse-ear cress).